The sequence spans 52 residues: Ornatin-B (52 aa).

The Cell attachment site motif lies at 42-44; it reads RGD.

This sequence belongs to the ornatin family.

It localises to the secreted. Its function is as follows. Potent inhibitor of fibrinogen interaction with platelet receptors expressed on glycoprotein IIb-IIIa complex. May prevent blood from clotting during either feeding and/or storage of ingested blood. This chain is Ornatin-B, found in Placobdella ornata (Turtle leech).